The following is a 232-amino-acid chain: Small ribosomal subunit protein uS3 (232 aa).

Positions 39–107 constitute a KH type-2 domain; sequence VRQFLTSELK…PAQINIAEVR (69 aa). Residues 213–232 are disordered; it reads AANAVEPKGDKPKKQRKGRK.

The protein belongs to the universal ribosomal protein uS3 family. As to quaternary structure, part of the 30S ribosomal subunit. Forms a tight complex with proteins S10 and S14.

Its function is as follows. Binds the lower part of the 30S subunit head. Binds mRNA in the 70S ribosome, positioning it for translation. This chain is Small ribosomal subunit protein uS3, found in Vibrio parahaemolyticus serotype O3:K6 (strain RIMD 2210633).